The chain runs to 376 residues: Putative peptide import ATP-binding protein BMEII0205 (376 aa).

The interval 1–25 is disordered; the sequence is MPLRPALHLRTGKLRQTPTHNEPDG. Residues 64 to 314 enclose the ABC transporter domain; that stretch reads VRTDDLVRDF…PLHPYSRALL (251 aa). 106–113 is an ATP binding site; it reads GESGSGKS.

This sequence belongs to the ABC transporter superfamily. The complex is composed of two ATP-binding proteins (BMEII0205 and BMEII0206), two transmembrane proteins (BMEII0207/BMEII0208 and BMEII0209) and a solute-binding protein (BMEII0210).

It localises to the cell inner membrane. Its function is as follows. Probably part of an ABC transporter complex that could be involved in peptide import. Probably responsible for energy coupling to the transport system. The polypeptide is Putative peptide import ATP-binding protein BMEII0205 (Brucella melitensis biotype 1 (strain ATCC 23456 / CCUG 17765 / NCTC 10094 / 16M)).